The primary structure comprises 602 residues: FAD-binding monooxygenase hmp7 (602 aa).

FAD contacts are provided by residues 108–111, 120–121, and tyrosine 126; these read TWYW and DV. 118–120 lines the NADP(+) pocket; the sequence is QCD. Residues 252–258 and 275–276 contribute to the NADP(+) site; these read TGATAVQ and RT.

Belongs to the FAD-binding monooxygenase family. The cofactor is FAD.

The protein operates within secondary metabolite biosynthesis. Its function is as follows. FAD-binding monooxygenase; part of the gene cluster that mediates the biosynthesis of hypothemycin, a resorcylic acid lactone (RAL) that irreversibly inhibits a subset of protein kinases with a conserved cysteine in the ATP binding site such as human ERK2. The first step is performed by both PKSs hmp3 and hmp8 and leads to the production of 7',8'-dehydrozearalenol (DHZ). The highly reducing PKS hpm8 synthesizes the reduced hexaketide (7S,11S,2E,8E)-7,11-dihydroxy-dodeca-2,8-dienoate, which is transferred downstream to the non-reducing PKS hpm3. Hpm3 then extends the reduced hexaketide to a nonaketide, after which regioselective cyclization and macrolactonization affords DHZ. The next step is the conversion of DHZ into aigialomycin C and is performed by the O-methyltransferase hmp5, the FAD-binding monooxygenase hmp7, and the cytochrome P450 monooxygenase hmp1. The wide substrate tolerance of the hmp5 and hmp7 implies that the reactions from DHZ to aigialomycin C can occur in any order. The steps from aigialomycin C to hypothemycin are less well established. The FAD-linked oxidoreductase hmp9 presumably catalyzes oxidation of the C-6' hydroxyl to a ketone. The timing of this oxidation is important, since the resulting enone functional group is a Michael acceptor that can react spontaneously with glutathione, an abundant metabolite in fungal cells. The glutathione S-transferase hmp2 catalyzes cis-trans isomerization of the 7',8' double bond with equilibrium favoring the trans isomer. The hpm6-encoded transporter might preferentially pump hypothemycin out of the cell relative to the trans isomer aigialomycin A. The cis-to-trans isomerization may be coupled with C-4' hydroxylation, since all known hypothemycin analogs containing the enone functional group also have hydroxyl groups at both C-4' and C-5'. This is FAD-binding monooxygenase hmp7 from Hypomyces subiculosus (Nectria subiculosa).